The following is a 150-amino-acid chain: U1 small nuclear ribonucleoprotein C (150 aa).

The segment at Tyr4–Asp36 adopts a Matrin-type zinc-finger fold. A disordered region spans residues Ser66–Pro127. Basic and acidic residues predominate over residues Asp80–Lys92. Positions Asn103–Met112 are enriched in acidic residues.

It belongs to the U1 small nuclear ribonucleoprotein C family. U1 snRNP is composed of the 7 core Sm proteins B/B', D1, D2, D3, E, F and G that assemble in a heptameric protein ring on the Sm site of the small nuclear RNA to form the core snRNP, and at least 3 U1 snRNP-specific proteins U1-70K, U1-A and U1-C. U1-C interacts with U1 snRNA and the 5' splice-site region of the pre-mRNA.

It localises to the nucleus. In terms of biological role, component of the spliceosomal U1 snRNP, which is essential for recognition of the pre-mRNA 5' splice-site and the subsequent assembly of the spliceosome. U1-C is directly involved in initial 5' splice-site recognition for both constitutive and regulated alternative splicing. The interaction with the 5' splice-site seems to precede base-pairing between the pre-mRNA and the U1 snRNA. Stimulates commitment or early (E) complex formation by stabilizing the base pairing of the 5' end of the U1 snRNA and the 5' splice-site region. The protein is U1 small nuclear ribonucleoprotein C of Candida albicans (strain WO-1) (Yeast).